Reading from the N-terminus, the 633-residue chain is E3 ubiquitin-protein ligase ZSWIM2 (633 aa).

The SWIM-type zinc-finger motif lies at 54–87 (FRVFLGNPHVCNCSTFPKGGELCKHICWVLLKKF). Residues 147 to 198 (CSICQELLLEKKLPVTFCRFGCGNSIHIKCMKILANYQSTSNTSMLKCPLCR) form an RING-type 1 zinc finger. The segment at 229 to 280 (HLGIPCNNCKQFPIEGKCYKCTECIEYHLCQECFDSCCHLSHTFTFREKRNQ) adopts a ZZ-type zinc-finger fold. Zn(2+)-binding residues include C234, C237, C249, C252, C258, C261, H267, and H270. An RING-type 2 zinc finger spans residues 344 to 388 (CLLCLKAFHLGQHTRLLPCTHKFHRKCIDNWLFHKCNSCPIDGQV).

In terms of assembly, dimer. Interacts with UBE2D1. In terms of processing, polyubiquitinated. Polyubiquitination is followed by degradation via the proteasome. As to expression, expression is testis-specific.

The catalysed reaction is S-ubiquitinyl-[E2 ubiquitin-conjugating enzyme]-L-cysteine + [acceptor protein]-L-lysine = [E2 ubiquitin-conjugating enzyme]-L-cysteine + N(6)-ubiquitinyl-[acceptor protein]-L-lysine.. Its function is as follows. E3 ubiquitin-protein ligase involved in the regulation of Fas-, DR3- and DR4-mediated apoptosis. Functions in conjunction with the UBE2D1, UBE2D3 and UBE2E1 E2 ubiquitin-conjugating enzymes. In Homo sapiens (Human), this protein is E3 ubiquitin-protein ligase ZSWIM2.